The primary structure comprises 254 residues: 14-3-3 protein 2 (254 aa).

It belongs to the 14-3-3 family. As to quaternary structure, homodimer.

This Solanum lycopersicum (Tomato) protein is 14-3-3 protein 2 (TFT2).